The sequence spans 302 residues: 4-hydroxy-tetrahydrodipicolinate synthase (302 aa).

Thr-55 contributes to the pyruvate binding site. Tyr-144 serves as the catalytic Proton donor/acceptor. The Schiff-base intermediate with substrate role is filled by Lys-172. Val-214 is a pyruvate binding site.

This sequence belongs to the DapA family. In terms of assembly, homotetramer; dimer of dimers.

It is found in the cytoplasm. It carries out the reaction L-aspartate 4-semialdehyde + pyruvate = (2S,4S)-4-hydroxy-2,3,4,5-tetrahydrodipicolinate + H2O + H(+). It functions in the pathway amino-acid biosynthesis; L-lysine biosynthesis via DAP pathway; (S)-tetrahydrodipicolinate from L-aspartate: step 3/4. In terms of biological role, catalyzes the condensation of (S)-aspartate-beta-semialdehyde [(S)-ASA] and pyruvate to 4-hydroxy-tetrahydrodipicolinate (HTPA). This Parasynechococcus marenigrum (strain WH8102) protein is 4-hydroxy-tetrahydrodipicolinate synthase.